A 778-amino-acid chain; its full sequence is LPS-assembly protein LptD (778 aa).

The N-terminal stretch at 1 to 23 is a signal peptide; the sequence is MKTRYSVLSVAMTAAFYTQYAQA.

The protein belongs to the LptD family. Component of the lipopolysaccharide transport and assembly complex. Interacts with LptE and LptA.

Its subcellular location is the cell outer membrane. Functionally, together with LptE, is involved in the assembly of lipopolysaccharide (LPS) at the surface of the outer membrane. The polypeptide is LPS-assembly protein LptD (Actinobacillus pleuropneumoniae serotype 7 (strain AP76)).